Reading from the N-terminus, the 262-residue chain is Acyl-[acyl-carrier-protein]--UDP-N-acetylglucosamine O-acyltransferase (262 aa).

It belongs to the transferase hexapeptide repeat family. LpxA subfamily. In terms of assembly, homotrimer.

Its subcellular location is the cytoplasm. The enzyme catalyses a (3R)-hydroxyacyl-[ACP] + UDP-N-acetyl-alpha-D-glucosamine = a UDP-3-O-[(3R)-3-hydroxyacyl]-N-acetyl-alpha-D-glucosamine + holo-[ACP]. It participates in glycolipid biosynthesis; lipid IV(A) biosynthesis; lipid IV(A) from (3R)-3-hydroxytetradecanoyl-[acyl-carrier-protein] and UDP-N-acetyl-alpha-D-glucosamine: step 1/6. Its function is as follows. Involved in the biosynthesis of lipid A, a phosphorylated glycolipid that anchors the lipopolysaccharide to the outer membrane of the cell. The polypeptide is Acyl-[acyl-carrier-protein]--UDP-N-acetylglucosamine O-acyltransferase (Vibrio atlanticus (strain LGP32) (Vibrio splendidus (strain Mel32))).